The following is a 125-amino-acid chain: Phosphoribosyl-AMP cyclohydrolase (125 aa).

Asp-74 is a Mg(2+) binding site. Cys-75 is a binding site for Zn(2+). 2 residues coordinate Mg(2+): Asp-76 and Asp-78. Zn(2+)-binding residues include Cys-92 and Cys-99.

This sequence belongs to the PRA-CH family. In terms of assembly, homodimer. Mg(2+) serves as cofactor. The cofactor is Zn(2+).

It localises to the cytoplasm. It carries out the reaction 1-(5-phospho-beta-D-ribosyl)-5'-AMP + H2O = 1-(5-phospho-beta-D-ribosyl)-5-[(5-phospho-beta-D-ribosylamino)methylideneamino]imidazole-4-carboxamide. Its pathway is amino-acid biosynthesis; L-histidine biosynthesis; L-histidine from 5-phospho-alpha-D-ribose 1-diphosphate: step 3/9. Its function is as follows. Catalyzes the hydrolysis of the adenine ring of phosphoribosyl-AMP. This Trichlorobacter lovleyi (strain ATCC BAA-1151 / DSM 17278 / SZ) (Geobacter lovleyi) protein is Phosphoribosyl-AMP cyclohydrolase.